Consider the following 431-residue polypeptide: Glutamate-1-semialdehyde 2,1-aminomutase (431 aa).

Residue lysine 269 is modified to N6-(pyridoxal phosphate)lysine.

Belongs to the class-III pyridoxal-phosphate-dependent aminotransferase family. HemL subfamily. Homodimer. The cofactor is pyridoxal 5'-phosphate.

The protein resides in the cytoplasm. It carries out the reaction (S)-4-amino-5-oxopentanoate = 5-aminolevulinate. It participates in porphyrin-containing compound metabolism; protoporphyrin-IX biosynthesis; 5-aminolevulinate from L-glutamyl-tRNA(Glu): step 2/2. It functions in the pathway porphyrin-containing compound metabolism; chlorophyll biosynthesis. The protein is Glutamate-1-semialdehyde 2,1-aminomutase of Chlorobaculum parvum (strain DSM 263 / NCIMB 8327) (Chlorobium vibrioforme subsp. thiosulfatophilum).